The chain runs to 261 residues: Putative [LysW]-aminoadipate/[LysW]-glutamate kinase (261 aa).

Residues 35 to 36 (GG), R62, and N162 contribute to the substrate site.

This sequence belongs to the acetylglutamate kinase family. LysZ subfamily.

It localises to the cytoplasm. The catalysed reaction is [amino-group carrier protein]-C-terminal-N-(1,4-dicarboxybutan-1-yl)-L-glutamine + ATP = [amino-group carrier protein]-C-terminal-N-(1-carboxy-5-phosphooxy-5-oxopentan-1-yl)-L-glutamine + ADP. The enzyme catalyses [amino-group carrier protein]-C-terminal-gamma-(L-glutamyl)-L-glutamate + ATP = [amino-group carrier protein]-C-terminal-gamma-(5-phospho-L-glutamyl)-L-glutamate + ADP. Its pathway is amino-acid biosynthesis; L-lysine biosynthesis via AAA pathway; L-lysine from L-alpha-aminoadipate (Thermus route): step 2/5. It functions in the pathway amino-acid biosynthesis; L-arginine biosynthesis. In terms of biological role, involved in both the arginine and lysine biosynthetic pathways. Phosphorylates the LysW-bound precursors glutamate (for arginine biosynthesis), respectively alpha-aminoadipate (for lysine biosynthesis). This chain is Putative [LysW]-aminoadipate/[LysW]-glutamate kinase, found in Pyrobaculum aerophilum (strain ATCC 51768 / DSM 7523 / JCM 9630 / CIP 104966 / NBRC 100827 / IM2).